The sequence spans 199 residues: Protein GrpE (199 aa).

The segment covering 1-24 (MSKQNKKDWKKFKDEHKEEHKVEN) has biased composition (basic and acidic residues). A disordered region spans residues 1–47 (MSKQNKKDWKKFKDEHKEEHKVENEILEEEIDEKSQHQEPALGHPSY).

It belongs to the GrpE family. As to quaternary structure, homodimer.

It is found in the cytoplasm. Functionally, participates actively in the response to hyperosmotic and heat shock by preventing the aggregation of stress-denatured proteins, in association with DnaK and GrpE. It is the nucleotide exchange factor for DnaK and may function as a thermosensor. Unfolded proteins bind initially to DnaJ; upon interaction with the DnaJ-bound protein, DnaK hydrolyzes its bound ATP, resulting in the formation of a stable complex. GrpE releases ADP from DnaK; ATP binding to DnaK triggers the release of the substrate protein, thus completing the reaction cycle. Several rounds of ATP-dependent interactions between DnaJ, DnaK and GrpE are required for fully efficient folding. In Legionella pneumophila (strain Paris), this protein is Protein GrpE.